Reading from the N-terminus, the 257-residue chain is Acetylglutamate kinase (257 aa).

Residues 43-44 (GG), arginine 65, and asparagine 157 contribute to the substrate site. Residues 180-185 (DVSGIL) and 208-210 (IIT) each bind ATP.

The protein belongs to the acetylglutamate kinase family. ArgB subfamily. Homodimer.

The protein localises to the cytoplasm. It catalyses the reaction N-acetyl-L-glutamate + ATP = N-acetyl-L-glutamyl 5-phosphate + ADP. The protein operates within amino-acid biosynthesis; L-arginine biosynthesis; N(2)-acetyl-L-ornithine from L-glutamate: step 2/4. Its function is as follows. Catalyzes the ATP-dependent phosphorylation of N-acetyl-L-glutamate. This chain is Acetylglutamate kinase, found in Pectobacterium carotovorum subsp. carotovorum (strain PC1).